A 368-amino-acid polypeptide reads, in one-letter code: tRNA(Met) cytidine acetate ligase (368 aa).

Residues 7–20, Gly-96, Asn-152, and Arg-175 each bind ATP; that span reads IAEFNPFHNGHKYL.

This sequence belongs to the TmcAL family.

The protein localises to the cytoplasm. It catalyses the reaction cytidine(34) in elongator tRNA(Met) + acetate + ATP = N(4)-acetylcytidine(34) in elongator tRNA(Met) + AMP + diphosphate. Catalyzes the formation of N(4)-acetylcytidine (ac(4)C) at the wobble position of elongator tRNA(Met), using acetate and ATP as substrates. First activates an acetate ion to form acetyladenylate (Ac-AMP) and then transfers the acetyl group to tRNA to form ac(4)C34. The protein is tRNA(Met) cytidine acetate ligase of Streptococcus pyogenes serotype M28 (strain MGAS6180).